A 76-amino-acid chain; its full sequence is Conotoxin ArMLCL-022 (76 aa).

The first 19 residues, 1 to 19 (MLCLPVFIILLLLASTAAS), serve as a signal peptide directing secretion. A propeptide spanning residues 20 to 52 (NPLETRIQSDLIRAALEDADMKTERGFLGVLMK) is cleaved from the precursor.

This sequence belongs to the conotoxin T superfamily. Expressed by the venom duct.

Its subcellular location is the secreted. This Conus arenatus (Sand-dusted cone) protein is Conotoxin ArMLCL-022.